Here is a 123-residue protein sequence, read N- to C-terminus: Crossover junction endodeoxyribonuclease Hjc (123 aa).

Glutamate 9 serves as a coordination point for Mg(2+). Serine 29 is a catalytic residue. 2 residues coordinate Mg(2+): aspartate 33 and glutamate 46.

The protein belongs to the Holliday junction resolvase Hjc family. In terms of assembly, homodimer. Probably interacts with PCNA and RadB. It depends on Mg(2+) as a cofactor. The cofactor is Mn(2+).

It carries out the reaction Endonucleolytic cleavage at a junction such as a reciprocal single-stranded crossover between two homologous DNA duplexes (Holliday junction).. With respect to regulation, cleavage inhibited by RadB in the absence (but not presence) of ATP. A structure-specific endonuclease that resolves Holliday junction (HJ) intermediates during genetic recombination. Cleaves 4-way DNA junctions introducing paired nicks in opposing strands, leaving a 5'-terminal phosphate and a 3'-terminal hydroxyl group that are subsequently ligated to produce recombinant products. Cleaves both mobile and immobile junctions. Binds 4-way junction DNA, a synthetic Hj, binding is not competed by dsDNA. The chain is Crossover junction endodeoxyribonuclease Hjc from Pyrococcus furiosus (strain ATCC 43587 / DSM 3638 / JCM 8422 / Vc1).